Consider the following 254-residue polypeptide: Peptide methionine sulfoxide reductase A5 (254 aa).

A signal peptide spans 1–26 (MARGSAAAAIAGVVWVLLLLVGVASG).

Belongs to the MsrA Met sulfoxide reductase family.

The catalysed reaction is L-methionyl-[protein] + [thioredoxin]-disulfide + H2O = L-methionyl-(S)-S-oxide-[protein] + [thioredoxin]-dithiol. It carries out the reaction [thioredoxin]-disulfide + L-methionine + H2O = L-methionine (S)-S-oxide + [thioredoxin]-dithiol. Functionally, catalyzes the reduction of methionine sulfoxide (MetSO) to methionine in proteins. Plays a protective role against oxidative stress by restoring activity to proteins that have been inactivated by methionine oxidation. MSRA family specifically reduces the MetSO S-enantiomer. This is Peptide methionine sulfoxide reductase A5 (MSRA5) from Oryza sativa subsp. japonica (Rice).